The following is a 273-amino-acid chain: Major prion protein homolog (273 aa).

The N-terminal stretch at 1 to 24 (MARLLTTCCLLALLLAACTDVALS) is a signal peptide. The disordered stretch occupies residues 25 to 121 (KKGKGKPSGG…QKPWKPPKTN (97 aa)). 8 tandem repeats follow at residues 42 to 47 (RQPSYP), 48 to 53 (RQPGYP), 54 to 59 (HNPGYP), 60 to 65 (HNPGYP), 66 to 71 (HNPGYP), 72 to 77 (HNPGYP), 78 to 83 (HNPGYP), and 84 to 89 (QNPGYP). Residues 42–89 (RQPSYPRQPGYPHNPGYPHNPGYPHNPGYPHNPGYPHNPGYPQNPGYP) are 8 X 6 AA tandem repeats of [HR]-[NQ]-P-G-Y-P. Residues 51–94 (GYPHNPGYPHNPGYPHNPGYPHNPGYPHNPGYPQNPGYPHNPGY) show a composition bias toward low complexity. Cu(2+) is bound by residues His-66, His-72, and His-78. Residues His-90 and Gly-93 each contribute to the Cu(2+) site. Polar residues predominate over residues 101–111 (YNPSSGGSYHN). Cys-192 and Cys-237 are joined by a disulfide. N-linked (GlcNAc...) asparagine glycans are attached at residues Asn-194, Asn-209, and Asn-218. The GPI-anchor amidated serine moiety is linked to residue Ser-248. A propeptide spans 249–273 (GIQLHPADTWLAVLLLLLTTLFAMH) (removed in mature form).

Belongs to the prion family. Monomer and homodimer. Has a tendency to aggregate into amyloid fibrils containing a cross-beta spine, formed by a steric zipper of superposed beta-strands. Soluble oligomers may represent an intermediate stage on the path to fibril formation. Copper binding may promote oligomerization. Spinal cord and brain.

The protein resides in the cell membrane. In terms of biological role, its primary physiological function is unclear. Has cytoprotective activity against internal or environmental stresses. May play a role in neuronal development and synaptic plasticity. May be required for neuronal myelin sheath maintenance. May play a role in iron uptake and iron homeostasis. Soluble oligomers are toxic to cultured neuroblastoma cells and induce apoptosis (in vitro). Association with GPC1 (via its heparan sulfate chains) targets PRNP to lipid rafts. Also provides Cu(2+) or Zn(2+) for the ascorbate-mediated GPC1 deaminase degradation of its heparan sulfate side chains. This chain is Major prion protein homolog (PRNP), found in Gallus gallus (Chicken).